The following is a 644-amino-acid chain: Chaperone protein DnaK (644 aa).

At threonine 200 the chain carries Phosphothreonine; by autocatalysis. The segment at 603–644 is disordered; that stretch reads VMAAEQAKSGGAAPGAAPGGAQQAAPDADVVDADFKEVDDKK. Over residues 612 to 630 the composition is skewed to low complexity; sequence GGAAPGAAPGGAQQAAPDA. The span at 635–644 shows a compositional bias: basic and acidic residues; the sequence is ADFKEVDDKK.

It belongs to the heat shock protein 70 family.

Its function is as follows. Acts as a chaperone. The sequence is that of Chaperone protein DnaK from Polynucleobacter asymbioticus (strain DSM 18221 / CIP 109841 / QLW-P1DMWA-1) (Polynucleobacter necessarius subsp. asymbioticus).